Reading from the N-terminus, the 431-residue chain is Mevalonate kinase (431 aa).

ATP is bound by residues Lys-13, Ser-139, and 144–150 (GAGLGSS). The Mg(2+) site is built by Ser-150 and Glu-198. Asp-209 functions as the Proton acceptor in the catalytic mechanism.

It belongs to the GHMP kinase family. Mevalonate kinase subfamily. In terms of assembly, homodimer.

The protein resides in the cytoplasm. It localises to the cytosol. The catalysed reaction is (R)-mevalonate + ATP = (R)-5-phosphomevalonate + ADP + H(+). It participates in isoprenoid biosynthesis; isopentenyl diphosphate biosynthesis via mevalonate pathway; isopentenyl diphosphate from (R)-mevalonate: step 1/3. Mevalonate kinase; part of the second module of ergosterol biosynthesis pathway that includes the middle steps of the pathway. ERG12 converts mevalonate into 5-phosphomevalonate. The second module is carried out in the vacuole and involves the formation of farnesyl diphosphate, which is also an important intermediate in the biosynthesis of ubiquinone, dolichol, heme and prenylated proteins. Activity by the mevalonate kinase ERG12 first converts mevalonate into 5-phosphomevalonate. 5-phosphomevalonate is then further converted to 5-diphosphomevalonate by the phosphomevalonate kinase ERG8. The diphosphomevalonate decarboxylase MVD then produces isopentenyl diphosphate. The isopentenyl-diphosphate delta-isomerase IDI1 then catalyzes the 1,3-allylic rearrangement of the homoallylic substrate isopentenyl (IPP) to its highly electrophilic allylic isomer, dimethylallyl diphosphate (DMAPP). Finally the farnesyl diphosphate synthase ERG20 catalyzes the sequential condensation of isopentenyl pyrophosphate with dimethylallyl pyrophosphate, and then with the resultant geranylpyrophosphate to the ultimate product farnesyl pyrophosphate. The chain is Mevalonate kinase from Candida albicans (strain SC5314 / ATCC MYA-2876) (Yeast).